Consider the following 48-residue polypeptide: Delta-ctenitoxin-Pn1b (48 aa).

Disulfide bonds link cysteine 1–cysteine 15, cysteine 8–cysteine 21, cysteine 12–cysteine 48, cysteine 14–cysteine 31, and cysteine 23–cysteine 29.

Belongs to the neurotoxin 03 (Tx2) family. 05 subfamily. As to expression, expressed by the venom gland.

Its subcellular location is the secreted. Its function is as follows. Insecticidal neurotoxin that reversibly inhibits the N-methyl-D-aspartate (NMDA)-subtype of ionotropic glutamate receptor (GRIN) and inhibits inactivation of insect sodium channels (Nav). Inhibits glutamate uptake in rat brain synaptosomes. In vivo, induces immediate excitatory effects when injected intrathoracically in houseflies and cockroaches. The sequence is that of Delta-ctenitoxin-Pn1b from Phoneutria nigriventer (Brazilian armed spider).